We begin with the raw amino-acid sequence, 376 residues long: Oligopeptide transport system permease protein OppC (376 aa).

The next 7 helical transmembrane spans lie at 46 to 66 (WAILFFLLIVLIILLAIIVPL), 149 to 169 (YPLLGTNGLGVDIWTLLWASM), 173 to 193 (LWIAIVVALVSMVFGTIYGAI), 209 to 229 (IIEIIDLVPSILWIIVLGATF), 242 to 262 (VIFTLIFVFWTWPAATTRIYI), 297 to 317 (LAVVFVSLIPAVIGYEASLVF), and 341 to 361 (IALITSSIVSFAILTVSTRVF). Positions 169-362 (MAKSLWIAIV…ILTVSTRVFA (194 aa)) constitute an ABC transmembrane type-1 domain.

It belongs to the binding-protein-dependent transport system permease family. OppBC subfamily. As to quaternary structure, the complex is composed of two ATP-binding proteins (OppD and OppF), two transmembrane proteins (OppB and OppC) and a solute-binding protein (OppA).

The protein resides in the cell membrane. Part of the ABC transporter complex OppABCDF involved in the uptake of oligopeptides. Probably responsible for the translocation of the substrate across the membrane. The protein is Oligopeptide transport system permease protein OppC (oppC) of Mycoplasma pneumoniae (strain ATCC 29342 / M129 / Subtype 1) (Mycoplasmoides pneumoniae).